Reading from the N-terminus, the 379-residue chain is Alcohol dehydrogenase class-3 (379 aa).

Residues Cys47, His69, Cys99, Cys102, Cys105, Cys113, and Cys176 each coordinate Zn(2+).

The protein belongs to the zinc-containing alcohol dehydrogenase family. Class-III subfamily. In terms of assembly, homodimer. The cofactor is Zn(2+).

It localises to the cytoplasm. The enzyme catalyses a primary alcohol + NAD(+) = an aldehyde + NADH + H(+). It catalyses the reaction a secondary alcohol + NAD(+) = a ketone + NADH + H(+). It carries out the reaction S-(hydroxymethyl)glutathione + NADP(+) = S-formylglutathione + NADPH + H(+). The catalysed reaction is S-(hydroxymethyl)glutathione + NAD(+) = S-formylglutathione + NADH + H(+). Functionally, class-III ADH is remarkably ineffective in oxidizing ethanol, but it readily catalyzes the oxidation of long-chain primary alcohols and the oxidation of S-(hydroxymethyl) glutathione. The sequence is that of Alcohol dehydrogenase class-3 (adh5) from Dictyostelium discoideum (Social amoeba).